Reading from the N-terminus, the 198-residue chain is Transcription factor FapR (198 aa).

Residues 102–167 (TRIARGHHLF…HGRTIVEVNS (66 aa)) enclose the MaoC-like domain.

It belongs to the FapR family.

Transcriptional factor involved in regulation of membrane lipid biosynthesis by repressing genes involved in fatty acid and phospholipid metabolism. The protein is Transcription factor FapR of Geobacillus kaustophilus (strain HTA426).